The following is a 503-amino-acid chain: Maturase K (503 aa).

The protein belongs to the intron maturase 2 family. MatK subfamily.

Its subcellular location is the plastid. It localises to the chloroplast. Functionally, usually encoded in the trnK tRNA gene intron. Probably assists in splicing its own and other chloroplast group II introns. The sequence is that of Maturase K from Eucalyptus globulus subsp. globulus (Tasmanian blue gum).